A 229-amino-acid chain; its full sequence is DNA mismatch repair protein MutH (229 aa).

The protein belongs to the MutH family.

It is found in the cytoplasm. Functionally, sequence-specific endonuclease that cleaves unmethylated GATC sequences. It is involved in DNA mismatch repair. This Shigella flexneri protein is DNA mismatch repair protein MutH.